Reading from the N-terminus, the 196-residue chain is Bcl-2-like protein 11 (196 aa).

Positions 1–68 (MAKQPSDVNS…PLAPPASPGP (68 aa)) are disordered. Residues 34–43 (TSLQTESQGN) show a composition bias toward polar residues. Residue S65 is modified to Phosphoserine; by MAPK. 3 positions are modified to phosphoserine: S73, S83, and S90. The interval 90 to 114 (SGYFSFDTDRSPAPMSCDKSTQTPS) is disordered. Positions 146–160 (IAQELRRIGDEFNET) match the BH3 motif.

The protein belongs to the Bcl-2 family. Forms heterodimers with a number of antiapoptotic Bcl-2 proteins, including MCL1, BCL2, BCL2L1 isoform Bcl-X(L), BCL2A1/BFL-1, and BCL2L2/BCLW. Does not heterodimerize with proapoptotic proteins such as BAD, BOK or BAK. Identified in a complex containing BCL2L11, DYNLL1 and BCL2L1 isoform Bcl-X(L); BH3 integrity is required for BCL2L1-binding. Interacts with YWHAZ. When phosphorylated, interacts with TRIM2; this interaction is associated with ubiquitination and degradation. Interacts (via BH3) with MCL1; this interaction may sequester BCL2L11 and prevent its pro-apoptotic activity. When phosphorylated, isoform BimEL interacts with USP27X; this interaction leads to BCL2L11 deubiquitination and stabilization. Interacts with GIMAP5. Interacts with BCL2L10/BCL-B. Post-translationally, phosphorylation at Ser-65 by MAPK1/MAPK3 leads interaction with TRIM2 and ubiquitination, followed by proteasomal degradation. Deubiquitination catalyzed by USP27X stabilizes the protein. Ubiquitination by TRIM2 following phosphorylation by MAPK1/MAPK3 leads to proteasomal degradation. Conversely, deubiquitination catalyzed by USP27X stabilizes the protein. As to expression, widely expressed.

The protein localises to the membrane. It is found in the mitochondrion. Its function is as follows. Induces apoptosis and anoikis. The protein is Bcl-2-like protein 11 (Bcl2l11) of Rattus norvegicus (Rat).